Here is a 327-residue protein sequence, read N- to C-terminus: Aspartate--ammonia ligase (327 aa).

The protein belongs to the class-II aminoacyl-tRNA synthetase family. AsnA subfamily.

It is found in the cytoplasm. The catalysed reaction is L-aspartate + NH4(+) + ATP = L-asparagine + AMP + diphosphate + H(+). Its pathway is amino-acid biosynthesis; L-asparagine biosynthesis; L-asparagine from L-aspartate (ammonia route): step 1/1. The chain is Aspartate--ammonia ligase from Bacillus cereus (strain AH187).